The following is a 126-amino-acid chain: Large ribosomal subunit protein uL22 (126 aa).

Belongs to the universal ribosomal protein uL22 family. Part of the 50S ribosomal subunit.

This protein binds specifically to 23S rRNA; its binding is stimulated by other ribosomal proteins, e.g. L4, L17, and L20. It is important during the early stages of 50S assembly. It makes multiple contacts with different domains of the 23S rRNA in the assembled 50S subunit and ribosome. Its function is as follows. The globular domain of the protein is located near the polypeptide exit tunnel on the outside of the subunit, while an extended beta-hairpin is found that lines the wall of the exit tunnel in the center of the 70S ribosome. This chain is Large ribosomal subunit protein uL22, found in Cereibacter sphaeroides (strain ATCC 17029 / ATH 2.4.9) (Rhodobacter sphaeroides).